Reading from the N-terminus, the 195-residue chain is Triosephosphate isomerase, cytosolic (195 aa).

H37 serves as the catalytic Electrophile. Catalysis depends on E107, which acts as the Proton acceptor.

It belongs to the triosephosphate isomerase family. In terms of assembly, homodimer.

It localises to the cytoplasm. It carries out the reaction D-glyceraldehyde 3-phosphate = dihydroxyacetone phosphate. It functions in the pathway carbohydrate biosynthesis; gluconeogenesis. It participates in carbohydrate degradation; glycolysis; D-glyceraldehyde 3-phosphate from glycerone phosphate: step 1/1. In Lactuca sativa (Garden lettuce), this protein is Triosephosphate isomerase, cytosolic.